The chain runs to 260 residues: Thiazole synthase (260 aa).

Lysine 101 (schiff-base intermediate with DXP) is an active-site residue. 1-deoxy-D-xylulose 5-phosphate is bound by residues glycine 162, 188–189, and 210–211; these read AG and NT.

It belongs to the ThiG family. In terms of assembly, homotetramer. Forms heterodimers with either ThiH or ThiS.

It is found in the cytoplasm. It carries out the reaction [ThiS sulfur-carrier protein]-C-terminal-Gly-aminoethanethioate + 2-iminoacetate + 1-deoxy-D-xylulose 5-phosphate = [ThiS sulfur-carrier protein]-C-terminal Gly-Gly + 2-[(2R,5Z)-2-carboxy-4-methylthiazol-5(2H)-ylidene]ethyl phosphate + 2 H2O + H(+). It functions in the pathway cofactor biosynthesis; thiamine diphosphate biosynthesis. Its function is as follows. Catalyzes the rearrangement of 1-deoxy-D-xylulose 5-phosphate (DXP) to produce the thiazole phosphate moiety of thiamine. Sulfur is provided by the thiocarboxylate moiety of the carrier protein ThiS. In vitro, sulfur can be provided by H(2)S. In Acidithiobacillus ferrooxidans (strain ATCC 23270 / DSM 14882 / CIP 104768 / NCIMB 8455) (Ferrobacillus ferrooxidans (strain ATCC 23270)), this protein is Thiazole synthase.